A 65-amino-acid chain; its full sequence is Large ribosomal subunit protein bL35 (65 aa).

Belongs to the bacterial ribosomal protein bL35 family.

The polypeptide is Large ribosomal subunit protein bL35 (Yersinia pseudotuberculosis serotype O:1b (strain IP 31758)).